The chain runs to 560 residues: OTU domain-containing protein 5-A (560 aa).

Disordered stretches follow at residues 1–100 and 141–190; these read MTIL…MACV and GGGT…QSED. Positions 17–32 are enriched in basic and acidic residues; that stretch reads DHPDDPDRRTGSDPHQ. A compositionally biased stretch (gly residues) spans 141-163; the sequence is GGGTGPGAAGGGGGGGGGGGVGG. The region spanning 211–334 is the OTU domain; the sequence is FVIKKMKEDG…NIHYNSVVNP (124 aa). The cys-loop stretch occupies residues 216 to 222; that stretch reads MKEDGAC. The active site involves aspartate 219. Cysteine 222 serves as the catalytic Nucleophile. Positions 271–281 are variable-loop; the sequence is KRKNNCHGNHI. The segment at 322-327 is his-loop; the sequence is YHRNIH. The active site involves histidine 327. The interval 411–496 is disordered; sequence ARQPRKASAT…ACVGPDRPTS (86 aa). Composition is skewed to low complexity over residues 417-430 and 437-448; these read ASATCSSATAAASS and ARSPRQRSSAPS.

This sequence belongs to the peptidase C85 family.

The catalysed reaction is Thiol-dependent hydrolysis of ester, thioester, amide, peptide and isopeptide bonds formed by the C-terminal Gly of ubiquitin (a 76-residue protein attached to proteins as an intracellular targeting signal).. Its function is as follows. Deubiquitinating enzyme that may function as negative regulator of the innate immune system. Has peptidase activity towards 'Lys-48'- and 'Lys-63'-linked polyubiquitin chains. Can also cleave 'Lys-11'-linked ubiquitin chains (in vitro). In Danio rerio (Zebrafish), this protein is OTU domain-containing protein 5-A (otud5a).